A 115-amino-acid chain; its full sequence is Pycsar effector protein TpPycTM (115 aa).

2 helical membrane passes run 44 to 64 and 74 to 94; these read IGNL…YATN and VWNI…VILV.

The protein resides in the cell inner membrane. In terms of biological role, pycsar (pyrimidine cyclase system for antiphage resistance) provides immunity against bacteriophage. The pyrimidine cyclase (PycC) synthesizes cyclic nucleotides in response to infection; these serve as specific second messenger signals. The signals activate the adjacent effector, leading to bacterial cell death and abortive phage infection. A clade C Pycsar system. Its function is as follows. The effector gene of a two-gene Pycsar system. Expression of this and adjacent uridylate cyclase TpPycC (AC A0A1T4LJ54) probably confers resistance to bacteriophage. The genes are probably only expressed in response to bacteriophage infection. Probably only responds to cUMP (produced by its cognate NTP cyclase), acts by impairing membrane integrity. In Treponema porcinum, this protein is Pycsar effector protein TpPycTM.